Reading from the N-terminus, the 359-residue chain is MSMSGSKKDVESEKQKALDAAISQIERAFGRGAIMKLKQHPAEKMDSVSTGSIALDAALGIGGLPKGRIVEIFGPESSGKTTLALHVIAEAQKQGGNCAFIDAEHALDTVYARKLGVNVGDLIVSQPDTGEQALHIVEYLVCSGAIDVIVVDSVAALTPRAEIEGDMGDQHMGLQARLLSHALRKLTSVVSKANCILVFINQIRIKIGVIYGNPEVTTGGSALKFYTSIRLDIRKVSAIKDKDNVIGNQTRVKVVKNKVAPPFKQAEFDIVYNEGISKLGEIVDMGVKFGFVEKSGAHYSYGAVKLGQGRENAKGYLKSNPDVANELEQKIRACLAESMHNSDLFAVDERTDVLEEEVF.

An ATP-binding site is contributed by 74-81; the sequence is GPESSGKT.

Belongs to the RecA family.

It is found in the cytoplasm. Functionally, can catalyze the hydrolysis of ATP in the presence of single-stranded DNA, the ATP-dependent uptake of single-stranded DNA by duplex DNA, and the ATP-dependent hybridization of homologous single-stranded DNAs. It interacts with LexA causing its activation and leading to its autocatalytic cleavage. In Anaplasma marginale (strain St. Maries), this protein is Protein RecA.